A 542-amino-acid polypeptide reads, in one-letter code: Nuclear hormone receptor family member nhr-35 (542 aa).

Positions 74–149 (NSICHICSDV…SGMRDDQVQS (76 aa)) form a DNA-binding region, nuclear receptor. NR C4-type zinc fingers lie at residues 77 to 97 (CHIC…CNGC) and 113 to 137 (CRFE…FMKC). The region spanning 186-438 (EYDQLLESLL…VLMEELILAE (253 aa)) is the NR LBD domain. Residues 445–487 (RQDQTPCSIMNDTPSGSQDMCSPCPEDLLRTSTSSNSPTNSSL) are disordered. The span at 448–464 (QTPCSIMNDTPSGSQDM) shows a compositional bias: polar residues. Positions 475 to 487 (TSTSSNSPTNSSL) are enriched in low complexity.

It belongs to the nuclear hormone receptor family.

The protein localises to the nucleus. In terms of biological role, orphan nuclear receptor. This Caenorhabditis elegans protein is Nuclear hormone receptor family member nhr-35 (nhr-35).